The chain runs to 223 residues: Mediator of RNA polymerase II transcription subunit 8 (223 aa).

Positions 2–138 are interaction with TBP1; sequence SQSTASLVPE…VRETSGVTTA (137 aa). The stretch at 33–59 forms a coiled coil; sequence LDAVRMRLAQLTHSLRRIRDEMSKAEL.

This sequence belongs to the Mediator complex subunit 8 family. Component of the Mediator complex, which is composed of at least 21 subunits that form three structurally distinct submodules. The Mediator head module contains MED6, MED8, MED11, SRB4/MED17, SRB5/MED18, ROX3/MED19, SRB2/MED20 and SRB6/MED22, the middle module contains MED1, MED4, NUT1/MED5, MED7, CSE2/MED9, NUT2/MED10, SRB7/MED21 and SOH1/MED31, and the tail module contains MED2, PGD1/MED3, RGR1/MED14, GAL11/MED15 and SIN4/MED16. The head and the middle modules interact directly with RNA polymerase II, whereas the elongated tail module interacts with gene-specific regulatory proteins. MED8 interacts directly with SRB5/MED18. Also interacts with Hexokinase B (HXK2). Interacts with TBP1.

The protein resides in the nucleus. Its function is as follows. Component of the Mediator complex, a coactivator involved in the regulated transcription of nearly all RNA polymerase II-dependent genes. Mediator functions as a bridge to convey information from gene-specific regulatory proteins to the basal RNA polymerase II transcription machinery. The Mediator complex, having a compact conformation in its free form, is recruited to promoters by direct interactions with regulatory proteins and serves for the assembly of a functional preinitiation complex with RNA polymerase II and the general transcription factors. The Mediator complex unfolds to an extended conformation and partially surrounds RNA polymerase II, specifically interacting with the unphosphorylated form of the C-terminal domain (CTD) of RNA polymerase II. The Mediator complex dissociates from the RNA polymerase II holoenzyme and stays at the promoter when transcriptional elongation begins. MED8 binds to the consensus sequence 5'-[AC][AG]GAAAT-3' in both the UAS of SUC2 and the DRS2 of HXK2. This Saccharomyces cerevisiae (strain ATCC 204508 / S288c) (Baker's yeast) protein is Mediator of RNA polymerase II transcription subunit 8 (MED8).